The sequence spans 201 residues: Recombination protein RecR (201 aa).

A C4-type zinc finger spans residues 60–75; the sequence is CSTCGNVDTADPCMIC. One can recognise a Toprim domain in the interval 83–178; it reads GTIIVVEDVS…KVTRLAHGVP (96 aa).

The protein belongs to the RecR family.

May play a role in DNA repair. It seems to be involved in an RecBC-independent recombinational process of DNA repair. It may act with RecF and RecO. This chain is Recombination protein RecR, found in Mesorhizobium japonicum (strain LMG 29417 / CECT 9101 / MAFF 303099) (Mesorhizobium loti (strain MAFF 303099)).